The following is a 142-amino-acid chain: Universal stress protein G (142 aa).

This sequence belongs to the universal stress protein A family.

This is Universal stress protein G (uspG) from Salmonella typhi.